The sequence spans 214 residues: Thymidylate kinase (214 aa).

7-14 contributes to the ATP binding site; sequence GVDGAGKR. DTMP-binding residues include Asp-9, Tyr-39, Phe-70, Arg-74, Arg-95, Asn-100, and Tyr-103. Mg(2+) is bound at residue Asp-9. The tract at residues 147-159 is LID; sequence GERSRGRAQRDPG. DTMP contacts are provided by Asp-163 and Tyr-165. Glu-166 contacts Mg(2+).

This sequence belongs to the thymidylate kinase family. In terms of assembly, homodimer. It depends on Mg(2+) as a cofactor.

It catalyses the reaction dTMP + ATP = dTDP + ADP. It functions in the pathway pyrimidine metabolism; dTTP biosynthesis. Its function is as follows. Catalyzes the reversible phosphorylation of deoxythymidine monophosphate (dTMP) to deoxythymidine diphosphate (dTDP), using ATP as its preferred phosphoryl donor. Situated at the junction of both de novo and salvage pathways of deoxythymidine triphosphate (dTTP) synthesis, is essential for DNA synthesis and cellular growth. The chain is Thymidylate kinase (tmk) from Mycobacterium tuberculosis (strain CDC 1551 / Oshkosh).